The following is a 239-amino-acid chain: Transmembrane ascorbate ferrireductase 1 (239 aa).

Over 1-7 the chain is Cytoplasmic; the sequence is MAVRINA. Residues 8-28 form a helical membrane-spanning segment; that stretch reads MAVTFVAHALAVIAAIMVLVW. A Cytochrome b561 domain is found at 13-216; it reads VAHALAVIAA…FGAFVVLTAS (204 aa). Topologically, residues 29-45 are lumenal; it reads SISYRGGLAWEATNKNL. A helical membrane pass occupies residues 46 to 66; it reads IFNLHPVLMLIGFIILGGEAI. A heme b-binding site is contributed by His50. Residues 67-81 are Cytoplasmic-facing; sequence ISYKSLPLEKPVKKL. A helical membrane pass occupies residues 82–102; the sequence is IHLILHAIALALGIFGICAAF. The heme b site is built by His83 and His117. Over 103 to 119 the chain is Lumenal; it reads KNHNESHIPNLYSLHSW. Residues 120-140 form a helical membrane-spanning segment; the sequence is IGIGVISLYGFQWVYSFIVFF. Over 141–155 the chain is Cytoplasmic; that stretch reads FPGGSTNLKSGLLPW. Heme b is bound at residue His156. Residues 156-176 form a helical membrane-spanning segment; sequence HAMLGLFVYILAVGNAALGFL. Residues 177-193 lie on the Lumenal side of the membrane; it reads EKLTFLENGGLDKYGSE. Residues 194–214 traverse the membrane as a helical segment; it reads AFLINFTAIITILFGAFVVLT. Residues 215 to 239 are Cytoplasmic-facing; that stretch reads ASAESPSPSPSVSNDDSVDFSYSAI. The tract at residues 217–239 is disordered; it reads AESPSPSPSVSNDDSVDFSYSAI. The segment covering 224–239 has biased composition (low complexity); sequence PSVSNDDSVDFSYSAI.

As to quaternary structure, homodimer. Heme b is required as a cofactor. As to expression, expressed in roots, seedlings and leaves. Lower expression in flowers. Expressed in the L1 layer of the shoot apex, in the epidermis of leaf primordia and young leaves and in vascular bundles. In the differentiation zone of the root, detected in the pericycle and in the epidermis, but not in the cortex. Strongly expressed in the lateral part of the root cap and in the epidermis of the root tip, but not in the meristematic tissue. Not expressed in lateral roots. In mature embryos, expressed in the epidermis, cotyledon tips and root tips.

It is found in the vacuole membrane. It carries out the reaction Fe(3+)(out) + L-ascorbate(in) = monodehydro-L-ascorbate radical(in) + Fe(2+)(out) + H(+). Functionally, two-heme-containing cytochrome. Catalyzes ascorbate-dependent trans-membrane ferric-chelate reduction. Able to use dihydrolipoic acid (DHLA) as an alternative substrate to ascorbate. The sequence is that of Transmembrane ascorbate ferrireductase 1 (CYB561A) from Arabidopsis thaliana (Mouse-ear cress).